Consider the following 157-residue polypeptide: Transcriptional repressor NrdR (157 aa).

Residues 1–22 are disordered; it reads MRCPKCGATKSSVIDSRQAEEG. Residues 3-34 fold into a zinc finger; the sequence is CPKCGATKSSVIDSRQAEEGNTIRRRRECDEC. Residues 49-139 form the ATP-cone domain; sequence LVVVKKDGTR…VYRSFKDVSE (91 aa).

Belongs to the NrdR family. Requires Zn(2+) as cofactor.

In terms of biological role, negatively regulates transcription of bacterial ribonucleotide reductase nrd genes and operons by binding to NrdR-boxes. This chain is Transcriptional repressor NrdR, found in Streptococcus pneumoniae (strain Hungary19A-6).